Consider the following 283-residue polypeptide: Pantothenate synthetase (283 aa).

Position 30–37 (30–37) interacts with ATP; the sequence is MGYLHEGH. H37 (proton donor) is an active-site residue. Q61 contributes to the (R)-pantoate binding site. Q61 contributes to the beta-alanine binding site. 147–150 is a binding site for ATP; the sequence is GLKD. Q153 provides a ligand contact to (R)-pantoate. Residues V176 and 184 to 187 each bind ATP; that span reads KSSR.

This sequence belongs to the pantothenate synthetase family. In terms of assembly, homodimer.

Its subcellular location is the cytoplasm. The catalysed reaction is (R)-pantoate + beta-alanine + ATP = (R)-pantothenate + AMP + diphosphate + H(+). It functions in the pathway cofactor biosynthesis; (R)-pantothenate biosynthesis; (R)-pantothenate from (R)-pantoate and beta-alanine: step 1/1. Catalyzes the condensation of pantoate with beta-alanine in an ATP-dependent reaction via a pantoyl-adenylate intermediate. The sequence is that of Pantothenate synthetase from Halalkalibacterium halodurans (strain ATCC BAA-125 / DSM 18197 / FERM 7344 / JCM 9153 / C-125) (Bacillus halodurans).